We begin with the raw amino-acid sequence, 213 residues long: Histone H1.2 (213 aa).

Over residues M1–K17 the composition is skewed to low complexity. The segment at M1–S41 is disordered. At S2 the chain carries N-acetylserine; partial. S2 carries the phosphoserine modification. K17 bears the N6-acetyllysine mark. N6-(2-hydroxyisobutyryl)lysine occurs at positions 23, 26, and 27. The residue at position 34 (K34) is an N6-(beta-hydroxybutyryl)lysine; alternate. An N6-crotonyllysine; alternate modification is found at K34. At K34 the chain carries N6-methyllysine; alternate. The region spanning S36 to K109 is the H15 domain. N6-(2-hydroxyisobutyryl)lysine is present on K46. The residue at position 52 (K52) is an N6-(beta-hydroxybutyryl)lysine; alternate. K52 carries the N6-(2-hydroxyisobutyryl)lysine; alternate modification. R54 carries the post-translational modification Citrulline. K63 carries the N6-(2-hydroxyisobutyryl)lysine modification. K64 is subject to N6-(beta-hydroxybutyryl)lysine; alternate. K64 bears the N6-crotonyllysine; alternate mark. K64 is modified (N6-(2-hydroxyisobutyryl)lysine; alternate). N6-(2-hydroxyisobutyryl)lysine is present on residues K75 and K81. N6-(beta-hydroxybutyryl)lysine; alternate is present on residues K85 and K90. Residues K85, K90, and K97 each carry the N6-crotonyllysine; alternate modification. N6-(2-hydroxyisobutyryl)lysine; alternate occurs at positions 85, 90, and 97. Residues T92–K213 are disordered. K97 carries the N6-succinyllysine; alternate modification. A Phosphoserine; by PKC modification is found at S104. An N6-(beta-hydroxybutyryl)lysine modification is found at K106. An N6-(2-hydroxyisobutyryl)lysine mark is found at K110, K117, K121, K129, and K136. Residues K119–K140 are compositionally biased toward basic residues. T146 carries the post-translational modification Phosphothreonine. Residue K148 is modified to N6-(2-hydroxyisobutyryl)lysine. Basic residues predominate over residues K149 to K160. N6-crotonyllysine; alternate is present on residues K159 and K168. N6-(2-hydroxyisobutyryl)lysine; alternate occurs at positions 159 and 168. Positions K169–A186 are enriched in basic residues. An N6-methyllysine; by EHMT1 and EHMT2 modification is found at K187. Position 188 is an ADP-ribosylserine (S188). Basic residues predominate over residues V193–K213. K213 is modified (N6-(2-hydroxyisobutyryl)lysine).

Belongs to the histone H1/H5 family. Interacts with TSC22D1 isoforms 2 and 5. Post-translationally, H1 histones are progressively phosphorylated during the cell cycle, becoming maximally phosphorylated during late G2 phase and M phase, and being dephosphorylated sharply thereafter. In terms of processing, crotonylation (Kcr) is specifically present in male germ cells and marks testis-specific genes in post-meiotic cells, including X-linked genes that escape sex chromosome inactivation in haploid cells. Crotonylation marks active promoters and enhancers and confers resistance to transcriptional repressors. It is also associated with post-meiotically activated genes on autosomes. Citrullination at Arg-54 (H1R54ci) by PADI4 takes place within the DNA-binding site of H1 and results in its displacement from chromatin and global chromatin decondensation, thereby promoting pluripotency and stem cell maintenance. Post-translationally, ADP-ribosylated on Ser-188 in response to DNA damage.

It is found in the nucleus. The protein resides in the chromosome. In terms of biological role, histone H1 protein binds to linker DNA between nucleosomes forming the macromolecular structure known as the chromatin fiber. Histones H1 are necessary for the condensation of nucleosome chains into higher-order structured fibers. Also acts as a regulator of individual gene transcription through chromatin remodeling, nucleosome spacing and DNA methylation. This chain is Histone H1.2, found in Homo sapiens (Human).